The sequence spans 235 residues: Large ribosomal subunit protein uL1 (235 aa).

This sequence belongs to the universal ribosomal protein uL1 family. In terms of assembly, part of the 50S ribosomal subunit.

In terms of biological role, binds directly to 23S rRNA. The L1 stalk is quite mobile in the ribosome, and is involved in E site tRNA release. Protein L1 is also a translational repressor protein, it controls the translation of the L11 operon by binding to its mRNA. This chain is Large ribosomal subunit protein uL1, found in Mycolicibacterium paratuberculosis (strain ATCC BAA-968 / K-10) (Mycobacterium paratuberculosis).